A 468-amino-acid chain; its full sequence is ATP synthase subunit beta (468 aa).

155–162 is a binding site for ATP; the sequence is GGAGVGKT.

Belongs to the ATPase alpha/beta chains family. In terms of assembly, F-type ATPases have 2 components, CF(1) - the catalytic core - and CF(0) - the membrane proton channel. CF(1) has five subunits: alpha(3), beta(3), gamma(1), delta(1), epsilon(1). CF(0) has three main subunits: a(1), b(2) and c(9-12). The alpha and beta chains form an alternating ring which encloses part of the gamma chain. CF(1) is attached to CF(0) by a central stalk formed by the gamma and epsilon chains, while a peripheral stalk is formed by the delta and b chains.

Its subcellular location is the cell membrane. The enzyme catalyses ATP + H2O + 4 H(+)(in) = ADP + phosphate + 5 H(+)(out). In terms of biological role, produces ATP from ADP in the presence of a proton gradient across the membrane. The catalytic sites are hosted primarily by the beta subunits. In Streptococcus pyogenes serotype M49 (strain NZ131), this protein is ATP synthase subunit beta.